The chain runs to 174 residues: Ribosome maturation factor RimP (174 aa).

This sequence belongs to the RimP family.

It is found in the cytoplasm. Required for maturation of 30S ribosomal subunits. The polypeptide is Ribosome maturation factor RimP (Bdellovibrio bacteriovorus (strain ATCC 15356 / DSM 50701 / NCIMB 9529 / HD100)).